We begin with the raw amino-acid sequence, 271 residues long: Sec-independent protein translocase protein TatC (271 aa).

5 helical membrane-spanning segments follow: residues 24 to 44 (ISVGAIIVGFILCYSFSEQIF), 78 to 98 (FFAGLFLAMPVLFTQMWLFIA), 112 to 132 (FLFVTPVLFFMGGTLAYYFVF), 159 to 179 (LVIKLIIAFGITFELPVGLLL), and 215 to 235 (FTQVMLAIPIMLMYEISIFFG). Positions 247 to 271 (AAEEAQWAADHNVDDDDVDHPEHKA) are disordered.

It belongs to the TatC family. In terms of assembly, the Tat system comprises two distinct complexes: a TatABC complex, containing multiple copies of TatA, TatB and TatC subunits, and a separate TatA complex, containing only TatA subunits. Substrates initially bind to the TatABC complex, which probably triggers association of the separate TatA complex to form the active translocon.

It is found in the cell inner membrane. In terms of biological role, part of the twin-arginine translocation (Tat) system that transports large folded proteins containing a characteristic twin-arginine motif in their signal peptide across membranes. Together with TatB, TatC is part of a receptor directly interacting with Tat signal peptides. This is Sec-independent protein translocase protein TatC from Magnetococcus marinus (strain ATCC BAA-1437 / JCM 17883 / MC-1).